Reading from the N-terminus, the 119-residue chain is uncharacterized protein (119 aa).

The first 30 residues, 1–30 (MCPECFFLMLCFCGYCSSSSSSFRSSPVYG), serve as a signal peptide directing secretion.

This is an uncharacterized protein from Escherichia coli (strain UTI89 / UPEC).